The sequence spans 163 residues: T-cell surface glycoprotein CD3 zeta chain (163 aa).

An N-terminal signal peptide occupies residues 1 to 21; sequence MKWKALFTAAILQAQLPITEA. Over 22 to 30 the chain is Extracellular; sequence QSFGLLDPK. Residues 31–51 traverse the membrane as a helical segment; it reads LCYLLDGILFIYGVILTALFL. Over 52–163 the chain is Cytoplasmic; sequence RVKFSRSADA…ALHMQALPPR (112 aa). Residue Ser58 is modified to Phosphoserine. ITAM domains lie at 61–89, 99–127, and 130–158; these read APAY…LDKR, KPRR…EIGM, and ERRR…LHMQ. A phosphotyrosine mark is found at Tyr64, Tyr72, Tyr83, Tyr110, Tyr122, Tyr141, and Tyr152. The segment covering 83–98 has biased composition (basic and acidic residues); sequence YDVLDKRRGRDPEMGG. Residues 83-111 form a disordered region; the sequence is YDVLDKRRGRDPEMGGKPRRKNPQEGLYN.

The protein belongs to the CD3Z/FCER1G family. As to quaternary structure, the TCR-CD3 complex is composed of a CD3D/CD3E and a CD3G/CD3E heterodimers that preferentially associate with TCRalpha and TCRbeta, respectively, to form TCRalpha/CD3E/CD3G and TCRbeta/CD3G/CD3E trimers. In turn, the hexamer interacts with CD3Z homodimer to form the TCR-CD3 complex. Alternatively, TCRalpha and TCRbeta can be replaced by TCRgamma and TCRdelta. Interacts with SLA. Interacts with TRAT1. Interacts with DOCK2. Interacts with SLA2. Interacts with SHB. Interacts with ZAP70. Interacts (tyrosine phosphorylated) with SHC1 (via SH2 domain). Interacts with PTPRC. Interacts with CRK; this interaction regulates CD3Z phosphorylation. Interacts (on T cell side) with CD81, ICAM1 and CD9 at immunological synapses between antigen-presenting cells and T cells. Interacts with CD160. Interacts with LY6E. Interacts with LY6E. The signaling subunit of immunoglobulin gamma (IgG) Fc receptor complex. As a homodimer or a heterodimer with FCER1G, associates with the ligand binding subunit FCGR3A (via transmembrane domain); this interaction is a prerequisite for Fc receptor complex expression on the cell surface. Interacts with CD5. In terms of processing, phosphorylated on Tyr residues after T-cell receptor triggering by LCK in association with CD4/CD8.

The protein resides in the cell membrane. Part of the TCR-CD3 complex present on T-lymphocyte cell surface that plays an essential role in adaptive immune response. When antigen presenting cells (APCs) activate T-cell receptor (TCR), TCR-mediated signals are transmitted across the cell membrane by the CD3 chains CD3D, CD3E, CD3G and CD3Z. All CD3 chains contain immunoreceptor tyrosine-based activation motifs (ITAMs) in their cytoplasmic domain. Upon TCR engagement, these motifs become phosphorylated by Src family protein tyrosine kinases LCK and FYN, resulting in the activation of downstream signaling pathways. CD3Z ITAMs phosphorylation creates multiple docking sites for the protein kinase ZAP70 leading to ZAP70 phosphorylation and its conversion into a catalytically active enzyme. Plays an important role in intrathymic T-cell differentiation. Additionally, participates in the activity-dependent synapse formation of retinal ganglion cells (RGCs) in both the retina and dorsal lateral geniculate nucleus (dLGN). The protein is T-cell surface glycoprotein CD3 zeta chain (CD247) of Sus scrofa (Pig).